Consider the following 885-residue polypeptide: Chitin synthase 3 (885 aa).

The tract at residues M1–S59 is disordered. Over residues P23 to L34 the composition is skewed to basic and acidic residues. Polar residues predominate over residues H36 to Y45. Helical transmembrane passes span F565–L585, I620–A640, V650–S670, I707–M727, S735–F755, and L837–L857.

Belongs to the chitin synthase family. Class III subfamily.

The protein resides in the cell membrane. It carries out the reaction [(1-&gt;4)-N-acetyl-beta-D-glucosaminyl](n) + UDP-N-acetyl-alpha-D-glucosamine = [(1-&gt;4)-N-acetyl-beta-D-glucosaminyl](n+1) + UDP + H(+). Functionally, polymerizes chitin, a structural polymer of the cell wall and septum, by transferring the sugar moiety of UDP-GlcNAc to the non-reducing end of the growing chitin polymer. Is not only stable at different pH, but is also able to tolerate a broad temperature range. With CHS2, plays an important role in virulence. This Exophiala dermatitidis (Black yeast-like fungus) protein is Chitin synthase 3.